The following is a 312-amino-acid chain: Olfactory receptor 51B6 (312 aa).

The Extracellular segment spans residues 1–23 (MGLNKSASTFQLTGFPGMEKAHH). An N-linked (GlcNAc...) asparagine glycan is attached at asparagine 4. The helical transmembrane segment at 24-44 (WIFIPLLAAYISILLGNGTLL) threads the bilayer. Residues 45 to 52 (FLIRNDHN) are Cytoplasmic-facing. Residues 53–73 (LHEPMYYFLAMLAATDLGVTL) form a helical membrane-spanning segment. The Extracellular portion of the chain corresponds to 74–97 (TTMPTVLGVLWLDHREIGHGACFS). Cysteines 95 and 187 form a disulfide. A helical membrane pass occupies residues 98–118 (QAYFIHTLSVMESGVLLAMAY). At 119–137 (DCFITIRSPLRYTSILTNT) the chain is on the cytoplasmic side. The helical transmembrane segment at 138 to 158 (QVMKIGVRVLTRAGLSIMPIV) threads the bilayer. The Extracellular portion of the chain corresponds to 159–194 (VRLHWFPYCRSHVLSHAFCLHQDVIKLACADITFNR). A helical transmembrane segment spans residues 195–215 (LYPVVVLFAMVLLDFLIIFFS). Over 216–235 (YILILKTVMGIGSGGERAKA) the chain is Cytoplasmic. A helical transmembrane segment spans residues 236 to 256 (LNTCVSHICCILVFYVTVVCL). Residues 257 to 271 (TFIHRFGKHVPHVVH) are Extracellular-facing. The chain crosses the membrane as a helical span at residues 272–292 (ITMSYIHFLFPPFMNPFIYSI). Residues 293–312 (KTKQIQSGILRLFSLPHSRA) are Cytoplasmic-facing.

It belongs to the G-protein coupled receptor 1 family.

Its subcellular location is the cell membrane. Its function is as follows. Odorant receptor. The polypeptide is Olfactory receptor 51B6 (OR51B6) (Homo sapiens (Human)).